The chain runs to 280 residues: uncharacterized protein (280 aa).

An NADP(+)-binding site is contributed by 3 to 29 (KKIAIVTGASSGFGLLAAVKLARSFFV). Serine 139 contacts substrate. Catalysis depends on tyrosine 152, which acts as the Proton acceptor.

The protein belongs to the short-chain dehydrogenases/reductases (SDR) family.

This is an uncharacterized protein from Bacillus subtilis (strain 168).